The sequence spans 171 residues: 3-hydroxydecanoyl-[acyl-carrier-protein] dehydratase (171 aa).

The active site involves H70.

This sequence belongs to the thioester dehydratase family. FabA subfamily. Homodimer.

The protein resides in the cytoplasm. It carries out the reaction a (3R)-hydroxyacyl-[ACP] = a (2E)-enoyl-[ACP] + H2O. The catalysed reaction is (3R)-hydroxydecanoyl-[ACP] = (2E)-decenoyl-[ACP] + H2O. The enzyme catalyses (2E)-decenoyl-[ACP] = (3Z)-decenoyl-[ACP]. The protein operates within lipid metabolism; fatty acid biosynthesis. Necessary for the introduction of cis unsaturation into fatty acids. Catalyzes the dehydration of (3R)-3-hydroxydecanoyl-ACP to E-(2)-decenoyl-ACP and then its isomerization to Z-(3)-decenoyl-ACP. Can catalyze the dehydratase reaction for beta-hydroxyacyl-ACPs with saturated chain lengths up to 16:0, being most active on intermediate chain length. This is 3-hydroxydecanoyl-[acyl-carrier-protein] dehydratase from Stenotrophomonas maltophilia (strain R551-3).